The primary structure comprises 185 residues: Sarcoplasmic calcium-binding proteins I, III, and IV (185 aa).

EF-hand domains are found at residues 5 to 41, 57 to 92, 102 to 137, and 138 to 173; these read FQKQKIKFTFDFFLDYNKDGSIQWEDFEEMIKRYKEV, SLEDEWRDLKGRADINKDDVVSWEEYLAMWEKTIAT, WCQNRIPFLFKGMDVSGDGIVDLEEFQNYCKNFQLQ, and CADVPAVYNVITDGGKVTFDLNRYKELYYRLLTSPA. Ca(2+) is bound by residues aspartate 19, asparagine 21, aspartate 23, serine 25, aspartate 30, aspartate 70, asparagine 72, aspartate 74, glutamate 81, aspartate 115, serine 117, aspartate 119, and glutamate 126.

Functionally, like parvalbumins, SCPs seem to be more abundant in fast contracting muscles, but no functional relationship can be established from this distribution. The sequence is that of Sarcoplasmic calcium-binding proteins I, III, and IV from Branchiostoma lanceolatum (Common lancelet).